A 122-amino-acid chain; its full sequence is Large ribosomal subunit protein uL14 (122 aa).

It belongs to the universal ribosomal protein uL14 family. In terms of assembly, part of the 50S ribosomal subunit. Forms a cluster with proteins L3 and L19. In the 70S ribosome, L14 and L19 interact and together make contacts with the 16S rRNA in bridges B5 and B8.

Its function is as follows. Binds to 23S rRNA. Forms part of two intersubunit bridges in the 70S ribosome. The polypeptide is Large ribosomal subunit protein uL14 (Marinomonas sp. (strain MWYL1)).